Here is a 269-residue protein sequence, read N- to C-terminus: dITP/XTP pyrophosphatase (269 aa).

Residue 22–27 coordinates substrate; that stretch reads SNNAHK. The active-site Proton acceptor is the aspartate 82. Aspartate 82 provides a ligand contact to Mg(2+). Substrate contacts are provided by residues serine 83, 165–168, lysine 188, and 193–194; these read FGYD and HR.

It belongs to the HAM1 NTPase family. Homodimer. It depends on Mg(2+) as a cofactor.

The catalysed reaction is XTP + H2O = XMP + diphosphate + H(+). The enzyme catalyses dITP + H2O = dIMP + diphosphate + H(+). It carries out the reaction ITP + H2O = IMP + diphosphate + H(+). Pyrophosphatase that catalyzes the hydrolysis of nucleoside triphosphates to their monophosphate derivatives, with a high preference for the non-canonical purine nucleotides XTP (xanthosine triphosphate), dITP (deoxyinosine triphosphate) and ITP. Seems to function as a house-cleaning enzyme that removes non-canonical purine nucleotides from the nucleotide pool, thus preventing their incorporation into DNA/RNA and avoiding chromosomal lesions. The chain is dITP/XTP pyrophosphatase from Treponema pallidum (strain Nichols).